Here is a 262-residue protein sequence, read N- to C-terminus: ATP synthase subunit a (262 aa).

A run of 7 helical transmembrane segments spans residues 30 to 50 (ITSLTNIAILFIIGLLVLTIF), 64 to 84 (WNIVLETWVASILGIVKDQIG), 91 to 111 (LIYFPLIFTFFSFVFISNILG), 123 to 143 (ISVTLGLSIAIMIGVTLIGFS), 149 to 169 (FFSLFVPKGTPLALVPLLVLI), 195 to 215 (LFGVISMLSVSACMAVSSILL), and 220 to 240 (IGLPLAVLVVLYGLELLVALL).

It belongs to the ATPase A chain family. In terms of assembly, F-type ATPases have 2 components, CF(1) - the catalytic core - and CF(0) - the membrane proton channel. CF(1) has five subunits: alpha(3), beta(3), gamma(1), delta(1), epsilon(1). CF(0) has three main subunits: a, b and c.

Its subcellular location is the mitochondrion inner membrane. Functionally, mitochondrial membrane ATP synthase (F(1)F(0) ATP synthase or Complex V) produces ATP from ADP in the presence of a proton gradient across the membrane which is generated by electron transport complexes of the respiratory chain. F-type ATPases consist of two structural domains, F(1) - containing the extramembraneous catalytic core and F(0) - containing the membrane proton channel, linked together by a central stalk and a peripheral stalk. During catalysis, ATP synthesis in the catalytic domain of F(1) is coupled via a rotary mechanism of the central stalk subunits to proton translocation. Key component of the proton channel; it may play a direct role in the translocation of protons across the membrane. The polypeptide is ATP synthase subunit a (ATP6) (Allomyces arbusculus (Aquatic fungus)).